The primary structure comprises 285 residues: HTH-type transcriptional regulator MurR (285 aa).

An HTH rpiR-type domain is found at 1–77 (MLYLTKISNA…MALIGEYSAS (77 aa)). The H-T-H motif DNA-binding region spans 37 to 56 (SRQMAKQLGISQSSIVKFAQ). The SIS domain occupies 128-279 (IIEVISKAPF…SLKMIQRSSE (152 aa)).

As to quaternary structure, homotetramer.

It participates in amino-sugar metabolism; N-acetylmuramate degradation [regulation]. Its function is as follows. Represses the expression of the murPQ operon involved in the uptake and degradation of N-acetylmuramic acid (MurNAc). Binds to two adjacent inverted repeats within the operator region. MurNAc 6-phosphate, the substrate of MurQ, is the specific inducer that weakens binding of MurR to the operator. This Shigella boydii serotype 18 (strain CDC 3083-94 / BS512) protein is HTH-type transcriptional regulator MurR.